Consider the following 441-residue polypeptide: Glutamyl-tRNA reductase (441 aa).

Substrate-binding positions include 49 to 52 (TCNR), S110, 115 to 117 (EPQ), and Q121. C50 functions as the Nucleophile in the catalytic mechanism. 190 to 195 (GAGEMA) provides a ligand contact to NADP(+).

It belongs to the glutamyl-tRNA reductase family. As to quaternary structure, homodimer.

It carries out the reaction (S)-4-amino-5-oxopentanoate + tRNA(Glu) + NADP(+) = L-glutamyl-tRNA(Glu) + NADPH + H(+). It participates in porphyrin-containing compound metabolism; protoporphyrin-IX biosynthesis; 5-aminolevulinate from L-glutamyl-tRNA(Glu): step 1/2. Its function is as follows. Catalyzes the NADPH-dependent reduction of glutamyl-tRNA(Glu) to glutamate 1-semialdehyde (GSA). In Sulfurihydrogenibium sp. (strain YO3AOP1), this protein is Glutamyl-tRNA reductase.